The sequence spans 183 residues: NAD(P)H-quinone oxidoreductase subunit J (183 aa).

Positions 1 to 21 (MAEENAQEKQAPPSAGEQSEP) are disordered.

It belongs to the complex I 30 kDa subunit family. In terms of assembly, NDH-1 can be composed of about 15 different subunits; different subcomplexes with different compositions have been identified which probably have different functions.

The protein localises to the cellular thylakoid membrane. It catalyses the reaction a plastoquinone + NADH + (n+1) H(+)(in) = a plastoquinol + NAD(+) + n H(+)(out). It carries out the reaction a plastoquinone + NADPH + (n+1) H(+)(in) = a plastoquinol + NADP(+) + n H(+)(out). In terms of biological role, NDH-1 shuttles electrons from an unknown electron donor, via FMN and iron-sulfur (Fe-S) centers, to quinones in the respiratory and/or the photosynthetic chain. The immediate electron acceptor for the enzyme in this species is believed to be plastoquinone. Couples the redox reaction to proton translocation, and thus conserves the redox energy in a proton gradient. Cyanobacterial NDH-1 also plays a role in inorganic carbon-concentration. The protein is NAD(P)H-quinone oxidoreductase subunit J of Synechococcus sp. (strain JA-2-3B'a(2-13)) (Cyanobacteria bacterium Yellowstone B-Prime).